We begin with the raw amino-acid sequence, 244 residues long: Lectin (244 aa).

The interval 1–20 (TETETTSFSIPKTDQPSSPK) is disordered.

This sequence belongs to the leguminous lectin family. As to quaternary structure, homodimer. In contrast to other Lathyrus lectins which are tetramer of two alpha and two beta chains.

This Lathyrus sphaericus (Spring vetchling) protein is Lectin.